The chain runs to 191 residues: Ribonuclease M5 1 (191 aa).

Residues 10-93 (KEVIVVEGKD…AFLTKHDAAP (84 aa)) enclose the Toprim domain. Mg(2+)-binding residues include Glu16, Asp62, and Asp64.

Belongs to the ribonuclease M5 family. Mg(2+) is required as a cofactor.

Its subcellular location is the cytoplasm. It catalyses the reaction Endonucleolytic cleavage of RNA, removing 21 and 42 nucleotides, respectively, from the 5'- and 3'-termini of a 5S-rRNA precursor.. In terms of biological role, required for correct processing of both the 5' and 3' ends of 5S rRNA precursor. Cleaves both sides of a double-stranded region yielding mature 5S rRNA in one step. The protein is Ribonuclease M5 1 of Ligilactobacillus salivarius (strain CECT 5713) (Lactobacillus salivarius).